The following is a 252-amino-acid chain: 14-3-3 protein 10 (252 aa).

The protein belongs to the 14-3-3 family. As to quaternary structure, homodimer.

The protein is 14-3-3 protein 10 (TFT10) of Solanum lycopersicum (Tomato).